Reading from the N-terminus, the 101-residue chain is Citrate lyase acyl carrier protein (101 aa).

At S14 the chain carries O-(phosphoribosyl dephospho-coenzyme A)serine.

It belongs to the CitD family. As to quaternary structure, oligomer with a subunit composition of (alpha,beta,gamma)6.

It localises to the cytoplasm. In terms of biological role, covalent carrier of the coenzyme of citrate lyase. The sequence is that of Citrate lyase acyl carrier protein from Lacticaseibacillus casei (strain BL23) (Lactobacillus casei).